The primary structure comprises 204 residues: Protein C (204 aa).

The segment at Met1–Ile78 is disordered. Over residues Lys10–Asn20 the composition is skewed to basic and acidic residues. Positions Ser25–Pro34 are enriched in low complexity.

The protein belongs to the respirovirus protein C family.

The chain is Protein C (P/V/C) from Homo sapiens (Human).